Reading from the N-terminus, the 166-residue chain is Peptide deformylase (166 aa).

Cys88 and His130 together coordinate Fe cation. Glu131 is a catalytic residue. His134 contacts Fe cation.

This sequence belongs to the polypeptide deformylase family. Requires Fe(2+) as cofactor.

It carries out the reaction N-terminal N-formyl-L-methionyl-[peptide] + H2O = N-terminal L-methionyl-[peptide] + formate. Functionally, removes the formyl group from the N-terminal Met of newly synthesized proteins. Requires at least a dipeptide for an efficient rate of reaction. N-terminal L-methionine is a prerequisite for activity but the enzyme has broad specificity at other positions. In Thermoanaerobacter sp. (strain X514), this protein is Peptide deformylase.